The chain runs to 103 residues: Somatoliberin (103 aa).

The N-terminal stretch at 1 to 19 (MLLWVLFVILILTSGSHCS) is a signal peptide. Propeptides lie at residues 20 to 30 (LPPSPPFRMQR) and 74 to 103 (QEDSMWTEDKQMTLESILQGFPRMKPSADA).

Belongs to the glucagon family.

The protein localises to the secreted. Its function is as follows. GRF is released by the hypothalamus and acts on the adenohypophyse to stimulate the secretion of growth hormone. This Mus musculus (Mouse) protein is Somatoliberin (Ghrh).